A 232-amino-acid chain; its full sequence is CD302 antigen (232 aa).

The N-terminal stretch at 1–22 (MPRAAPPALLLPLLGLAAAAAA) is a signal peptide. Residues 23 to 168 (DCPSSTWVQF…YEKKYLSDNR (146 aa)) are Extracellular-facing. Residues 32–152 (FQDSCYIFLQ…CEVSSVEGTL (121 aa)) enclose the C-type lectin domain. Asn-109 carries an N-linked (GlcNAc...) asparagine glycan. Cys-128 and Cys-143 are disulfide-bonded. Residues 169 to 189 (ILISALVIASTVILTVLGAVV) traverse the membrane as a helical segment. At 190–232 (WFLYKRSLDSGFTTVFSAAHQSPYNDDCVLVVAEENEYDIQFN) the chain is on the cytoplasmic side.

The protein resides in the membrane. It is found in the cell projection. Its subcellular location is the filopodium. It localises to the cytoplasm. The protein localises to the cell cortex. The protein resides in the microvillus. Its function is as follows. Potential multifunctional C-type lectin receptor that may play roles in endocytosis and phagocytosis as well as in cell adhesion and migration. The chain is CD302 antigen from Bos taurus (Bovine).